A 173-amino-acid polypeptide reads, in one-letter code: NEDD4-binding protein 2-like 1 (173 aa).

Residues 1–35 (MEESFLESFGRLSLRQQQPPPPRPPAPPPLRGTPP) are disordered. Residues 18 to 32 (QPPPPRPPAPPPLRG) are compositionally biased toward pro residues.

Interacts with dynactin subunit proteins, including DCTN4, DCTN5 and DCTN5.

Its function is as follows. Might play a role in adipocyte differentiation and triglyceride accumulation. This Bos taurus (Bovine) protein is NEDD4-binding protein 2-like 1 (N4BP2L1).